A 452-amino-acid chain; its full sequence is MPLTVGLISLGCPKNLVDSEIMIGHLQKAGMTMTPEPELADVMVVNTCAFIDQAKQEAIDAILDIVRARENGAYPENQKLIVAGCLSQRFRKELPALLPEVDAFIGPDQITKLPEIITQVMDRTIQDRNFIEGKCRYVPDWNTPRYRLTPPHTAYIKIAEGCNHGCAYCIIPMIRGRHRSRSQQDVVREAETLIRSGVKEICLIAQDITYYGMDKWTDARPNRRSAVDSSRGESLASLLRALNAIEGEFWIRLLYTHPAHWSDELTAAIAECPKVARYVDIPLQHISDNMLDAMQRVTDGNYIRTLLRNIRKAVPGIAIRTTFITGFPGETEDDHQELMEFIEEFRFERAGIFTFSREEGTKAYKMPNQVHHRTKARRYNEATLLLARLASETGQEQIGRQIRVLVDAPGVARTEWDAPDIDGTVSVPLTLPVGQFATVTVTDAVAYELTAE.

The MTTase N-terminal domain maps to 3 to 122; the sequence is LTVGLISLGC…LPEIITQVMD (120 aa). Residues Cys-12, Cys-48, Cys-85, Cys-162, Cys-166, and Cys-169 each contribute to the [4Fe-4S] cluster site. The Radical SAM core domain maps to 148 to 392; the sequence is LTPPHTAYIK…TLLLARLASE (245 aa). The region spanning 395 to 452 is the TRAM domain; it reads QEQIGRQIRVLVDAPGVARTEWDAPDIDGTVSVPLTLPVGQFATVTVTDAVAYELTAE.

It belongs to the methylthiotransferase family. RimO subfamily. The cofactor is [4Fe-4S] cluster.

Its subcellular location is the cytoplasm. The enzyme catalyses L-aspartate(89)-[ribosomal protein uS12]-hydrogen + (sulfur carrier)-SH + AH2 + 2 S-adenosyl-L-methionine = 3-methylsulfanyl-L-aspartate(89)-[ribosomal protein uS12]-hydrogen + (sulfur carrier)-H + 5'-deoxyadenosine + L-methionine + A + S-adenosyl-L-homocysteine + 2 H(+). Functionally, catalyzes the methylthiolation of an aspartic acid residue of ribosomal protein uS12. The protein is Ribosomal protein uS12 methylthiotransferase RimO of Akkermansia muciniphila (strain ATCC BAA-835 / DSM 22959 / JCM 33894 / BCRC 81048 / CCUG 64013 / CIP 107961 / Muc).